The primary structure comprises 409 residues: uncharacterized protein (409 aa).

One can recognise an OBG-type G domain in the interval 5 to 274 (ILIGFVGKPS…LAKQGFVKYE (270 aa)). GTP-binding positions include 11 to 18 (GKPSSGKS) and 83 to 87 (DVAGL).

It belongs to the TRAFAC class OBG-HflX-like GTPase superfamily. OBG GTPase family.

It localises to the cytoplasm. The protein resides in the nucleus. This is an uncharacterized protein from Schizosaccharomyces pombe (strain 972 / ATCC 24843) (Fission yeast).